Here is a 688-residue protein sequence, read N- to C-terminus: Potassium-transporting ATPase ATP-binding subunit (688 aa).

Helical transmembrane passes span 37-57, 65-85, 219-239, and 262-282; these read FIVY…LFGI, ILFI…AEAI, IALQ…TASL, and LALL…AIGI. Catalysis depends on Asp313, which acts as the 4-aspartylphosphate intermediate. Residues Asp350, Glu354, 383–390, and Lys401 each bind ATP; that span reads FTAKTRMS. Mg(2+) is bound by residues Asp524 and Asp528. 3 helical membrane-spanning segments follow: residues 586 to 606, 622 to 642, and 668 to 688; these read IAND…GLFP, AILS…PLAL, and IIAP…LGIV.

The protein belongs to the cation transport ATPase (P-type) (TC 3.A.3) family. Type IA subfamily. In terms of assembly, the system is composed of three essential subunits: KdpA, KdpB and KdpC.

It is found in the cell membrane. It carries out the reaction K(+)(out) + ATP + H2O = K(+)(in) + ADP + phosphate + H(+). Its function is as follows. Part of the high-affinity ATP-driven potassium transport (or Kdp) system, which catalyzes the hydrolysis of ATP coupled with the electrogenic transport of potassium into the cytoplasm. This subunit is responsible for energy coupling to the transport system and for the release of the potassium ions to the cytoplasm. The polypeptide is Potassium-transporting ATPase ATP-binding subunit (Clostridium perfringens (strain ATCC 13124 / DSM 756 / JCM 1290 / NCIMB 6125 / NCTC 8237 / Type A)).